The following is a 365-amino-acid chain: Uroporphyrinogen decarboxylase (365 aa).

Substrate-binding positions include 27 to 31, Asp77, Tyr154, Thr209, and His327; that span reads RQAGR.

It belongs to the uroporphyrinogen decarboxylase family. Homodimer.

The protein resides in the cytoplasm. It catalyses the reaction uroporphyrinogen III + 4 H(+) = coproporphyrinogen III + 4 CO2. It functions in the pathway porphyrin-containing compound metabolism; protoporphyrin-IX biosynthesis; coproporphyrinogen-III from 5-aminolevulinate: step 4/4. Functionally, catalyzes the decarboxylation of four acetate groups of uroporphyrinogen-III to yield coproporphyrinogen-III. The sequence is that of Uroporphyrinogen decarboxylase from Nitrosospira multiformis (strain ATCC 25196 / NCIMB 11849 / C 71).